The chain runs to 116 residues: Mercuric transport protein MerT (116 aa).

The next 2 helical transmembrane spans lie at 16-36 (LAAI…ALGF) and 46-66 (VLEP…FFAW). Cys24 and Cys25 together coordinate Hg(2+). Residues Cys76 and Cys82 each contribute to the Hg(2+) site. A helical membrane pass occupies residues 94–114 (IFWFVAVLVLVALGFPYVMPF).

The protein belongs to the MerT family.

Its subcellular location is the cell inner membrane. Its function is as follows. Involved in mercury resistance. Probably transfers a mercuric ion from the periplasmic Hg(2+)-binding protein MerP to the cytoplasmic mercuric reductase MerA. This is Mercuric transport protein MerT from Acinetobacter calcoaceticus.